Here is a 40-residue protein sequence, read N- to C-terminus: Photosystem II reaction center protein J (40 aa).

The chain crosses the membrane as a helical span at residues 8 to 28 (IPLWLIGTVTGIIVIGLLGIF).

This sequence belongs to the PsbJ family. In terms of assembly, PSII is composed of 1 copy each of membrane proteins PsbA, PsbB, PsbC, PsbD, PsbE, PsbF, PsbH, PsbI, PsbJ, PsbK, PsbL, PsbM, PsbT, PsbX, PsbY, PsbZ, Psb30/Ycf12, at least 3 peripheral proteins of the oxygen-evolving complex and a large number of cofactors. It forms dimeric complexes.

It localises to the plastid. The protein localises to the chloroplast thylakoid membrane. Its function is as follows. One of the components of the core complex of photosystem II (PSII). PSII is a light-driven water:plastoquinone oxidoreductase that uses light energy to abstract electrons from H(2)O, generating O(2) and a proton gradient subsequently used for ATP formation. It consists of a core antenna complex that captures photons, and an electron transfer chain that converts photonic excitation into a charge separation. The protein is Photosystem II reaction center protein J of Pinus koraiensis (Korean pine).